We begin with the raw amino-acid sequence, 290 residues long: Xyloglucan endotransglycosylase/hydrolase protein 8 (290 aa).

A signal peptide spans 1-25; that stretch reads MAKHLALSVAAAVAVSWLAASSAAA. The GH16 domain maps to 26–218; it reads AGFYEKFDVV…WSGAPFVVSY (193 aa). Glu-106 acts as the Nucleophile in catalysis. Glu-110 functions as the Proton donor in the catalytic mechanism. Glu-110 is a xyloglucan binding site. N-linked (GlcNAc...) asparagine glycosylation is present at Asn-114. Residues 123-125, 133-135, and 197-198 each bind xyloglucan; these read NTN, KKE, and YW. 2 disulfide bridges follow: Cys-226-Cys-240 and Cys-273-Cys-287. Arg-278 is a xyloglucan binding site.

It belongs to the glycosyl hydrolase 16 family. XTH group 2 subfamily. Contains at least one intrachain disulfide bond essential for its enzymatic activity. As to expression, transcript strongly detected in leaf sheaths. Weakly or not expressed in leaf blades, roots and calli. Accumulation of transcript detected in shoot apex meristem, vascular tissues, young leaves, vascular bundles of leaf sheaths, and peripheral cylinder of the vascular bundles and fibers in the nodal region.

It is found in the secreted. It localises to the cell wall. The protein localises to the extracellular space. The protein resides in the apoplast. The catalysed reaction is breaks a beta-(1-&gt;4) bond in the backbone of a xyloglucan and transfers the xyloglucanyl segment on to O-4 of the non-reducing terminal glucose residue of an acceptor, which can be a xyloglucan or an oligosaccharide of xyloglucan.. Its function is as follows. Catalyzes xyloglucan endohydrolysis (XEH) and/or endotransglycosylation (XET). Cleaves and religates xyloglucan polymers, an essential constituent of the primary cell wall, and thereby participates in cell wall construction of growing tissues. May promote elongation of three internodes (II, III and IV) and may be involved in cell elongation processes. The sequence is that of Xyloglucan endotransglycosylase/hydrolase protein 8 (XTH8) from Oryza sativa subsp. japonica (Rice).